Reading from the N-terminus, the 385-residue chain is Aspartate carbamoyltransferase 2, chloroplastic (385 aa).

A chloroplast-targeting transit peptide spans 1 to 30; the sequence is MTASSSLFSCSMHMEVLTPKISKWPKNFVS. Residues Arg-131 and Thr-132 each coordinate carbamoyl phosphate. Positions 131 and 132 each coordinate UMP. Lys-161 serves as a coordination point for L-aspartate. Carbamoyl phosphate is bound by residues Arg-182, His-210, and Gln-213. The UMP site is built by Arg-182 and His-210. UMP contacts are provided by Arg-243 and Arg-305. L-aspartate is bound by residues Arg-243 and Arg-305. 2 residues coordinate carbamoyl phosphate: Leu-345 and Pro-346.

This sequence belongs to the aspartate/ornithine carbamoyltransferase superfamily. ATCase family. As to quaternary structure, homotrimer.

The protein localises to the plastid. It localises to the chloroplast. The enzyme catalyses carbamoyl phosphate + L-aspartate = N-carbamoyl-L-aspartate + phosphate + H(+). It participates in pyrimidine metabolism; UMP biosynthesis via de novo pathway; (S)-dihydroorotate from bicarbonate: step 2/3. Feedback inhibited by UMP. Its function is as follows. Catalyzes the condensation of carbamoyl phosphate and aspartate to form carbamoyl aspartate and inorganic phosphate, the committed step in the de novo pyrimidine nucleotide biosynthesis pathway. In Pisum sativum (Garden pea), this protein is Aspartate carbamoyltransferase 2, chloroplastic (PYRB2).